A 714-amino-acid chain; its full sequence is DNA ligase (714 aa).

NAD(+)-binding positions include 48 to 52 (DADYD), 97 to 98 (SL), and Glu-129. The active-site N6-AMP-lysine intermediate is Lys-131. NAD(+) contacts are provided by Arg-152, Glu-189, Lys-307, and Lys-331. The Zn(2+) site is built by Cys-436, Cys-439, Cys-454, and Cys-460. Residues 637 to 714 (KQDTAVAGKT…TEDEWLALIG (78 aa)) form the BRCT domain.

It belongs to the NAD-dependent DNA ligase family. LigA subfamily. Requires Mg(2+) as cofactor. Mn(2+) serves as cofactor.

The enzyme catalyses NAD(+) + (deoxyribonucleotide)n-3'-hydroxyl + 5'-phospho-(deoxyribonucleotide)m = (deoxyribonucleotide)n+m + AMP + beta-nicotinamide D-nucleotide.. Functionally, DNA ligase that catalyzes the formation of phosphodiester linkages between 5'-phosphoryl and 3'-hydroxyl groups in double-stranded DNA using NAD as a coenzyme and as the energy source for the reaction. It is essential for DNA replication and repair of damaged DNA. The sequence is that of DNA ligase from Rhodopseudomonas palustris (strain BisB5).